Reading from the N-terminus, the 79-residue chain is Small ribosomal subunit protein bS18 (79 aa).

The protein belongs to the bacterial ribosomal protein bS18 family. As to quaternary structure, part of the 30S ribosomal subunit. Forms a tight heterodimer with protein bS6.

Its function is as follows. Binds as a heterodimer with protein bS6 to the central domain of the 16S rRNA, where it helps stabilize the platform of the 30S subunit. The protein is Small ribosomal subunit protein bS18 of Rhodopseudomonas palustris (strain HaA2).